The following is a 158-amino-acid chain: Protein Smg homolog (158 aa).

The protein belongs to the Smg family.

This Thioalkalivibrio sulfidiphilus (strain HL-EbGR7) protein is Protein Smg homolog.